The chain runs to 149 residues: Arginine repressor (149 aa).

This sequence belongs to the ArgR family.

It localises to the cytoplasm. The protein operates within amino-acid biosynthesis; L-arginine biosynthesis [regulation]. Regulates arginine biosynthesis genes. The sequence is that of Arginine repressor from Chlorobium phaeobacteroides (strain DSM 266 / SMG 266 / 2430).